The sequence spans 153 residues: Putative pre-16S rRNA nuclease (153 aa).

Belongs to the YqgF nuclease family.

It is found in the cytoplasm. Its function is as follows. Could be a nuclease involved in processing of the 5'-end of pre-16S rRNA. This chain is Putative pre-16S rRNA nuclease, found in Prochlorococcus marinus (strain MIT 9215).